The following is a 111-amino-acid chain: Integration host factor subunit alpha (111 aa).

It belongs to the bacterial histone-like protein family. As to quaternary structure, heterodimer of an alpha and a beta chain.

Its function is as follows. This protein is one of the two subunits of integration host factor, a specific DNA-binding protein that functions in genetic recombination as well as in transcriptional and translational control. This is Integration host factor subunit alpha from Chelativorans sp. (strain BNC1).